The sequence spans 83 residues: RNA-binding protein Hfq (83 aa).

The Sm domain maps to 10–70 (DTFLNQVRKE…ISTVMPLRPI (61 aa)).

This sequence belongs to the Hfq family. In terms of assembly, homohexamer.

RNA chaperone that binds small regulatory RNA (sRNAs) and mRNAs to facilitate mRNA translational regulation in response to envelope stress, environmental stress and changes in metabolite concentrations. Also binds with high specificity to tRNAs. The polypeptide is RNA-binding protein Hfq (Desulfitobacterium hafniense (strain DSM 10664 / DCB-2)).